A 98-amino-acid polypeptide reads, in one-letter code: Biogenesis of lysosome-related organelles complex 1 subunit SNN1 (98 aa).

Residues 55–98 adopt a coiled-coil conformation; that stretch reads MDEQELLQEEGSLKEELARVNQLKKRLDKLTELYAELARKCGAL.

Belongs to the SNAPIN family. In terms of assembly, component of the biogenesis of lysosome-related organelles complex-1 (BLOC-1).

It is found in the endosome. Its function is as follows. Component of the biogenesis of lysosome-related organelles complex-1 (BLOC-1), a complex involved in endosomal cargo sorting. In Eremothecium gossypii (strain ATCC 10895 / CBS 109.51 / FGSC 9923 / NRRL Y-1056) (Yeast), this protein is Biogenesis of lysosome-related organelles complex 1 subunit SNN1 (SNN1).